A 205-amino-acid chain; its full sequence is ATP-dependent Clp protease proteolytic subunit (205 aa).

Serine 109 serves as the catalytic Nucleophile. The active site involves histidine 134.

Belongs to the peptidase S14 family. As to quaternary structure, fourteen ClpP subunits assemble into 2 heptameric rings which stack back to back to give a disk-like structure with a central cavity, resembling the structure of eukaryotic proteasomes.

The protein resides in the cytoplasm. The enzyme catalyses Hydrolysis of proteins to small peptides in the presence of ATP and magnesium. alpha-casein is the usual test substrate. In the absence of ATP, only oligopeptides shorter than five residues are hydrolyzed (such as succinyl-Leu-Tyr-|-NHMec, and Leu-Tyr-Leu-|-Tyr-Trp, in which cleavage of the -Tyr-|-Leu- and -Tyr-|-Trp bonds also occurs).. Its function is as follows. Cleaves peptides in various proteins in a process that requires ATP hydrolysis. Has a chymotrypsin-like activity. Plays a major role in the degradation of misfolded proteins. This Baumannia cicadellinicola subsp. Homalodisca coagulata protein is ATP-dependent Clp protease proteolytic subunit.